The primary structure comprises 132 residues: Small ribosomal subunit protein uS8 (132 aa).

It belongs to the universal ribosomal protein uS8 family. Part of the 30S ribosomal subunit. Contacts proteins S5 and S12.

One of the primary rRNA binding proteins, it binds directly to 16S rRNA central domain where it helps coordinate assembly of the platform of the 30S subunit. In Latilactobacillus sakei subsp. sakei (strain 23K) (Lactobacillus sakei subsp. sakei), this protein is Small ribosomal subunit protein uS8.